The following is a 209-amino-acid chain: Guanylate kinase (209 aa).

The 179-residue stretch at 8-186 (GVLYIVSAPS…ALQDLVAITR (179 aa)) folds into the Guanylate kinase-like domain. Position 15-22 (15-22 (APSGAGKT)) interacts with ATP.

It belongs to the guanylate kinase family.

The protein localises to the cytoplasm. The enzyme catalyses GMP + ATP = GDP + ADP. Essential for recycling GMP and indirectly, cGMP. The protein is Guanylate kinase of Thiobacillus denitrificans (strain ATCC 25259 / T1).